Here is a 572-residue protein sequence, read N- to C-terminus: Transmembrane glycoprotein NMB (572 aa).

Residues 1–22 (MESLCGVLVFLLLAAGLPLQAA) form the signal peptide. At 23–500 (KRFRDVLGHE…DLGSPLRTVN (478 aa)) the chain is on the extracellular side. 9 N-linked (GlcNAc...) asparagine glycosylation sites follow: Asn-93, Asn-134, Asn-200, Asn-249, Asn-275, Asn-296, Asn-300, Asn-306, and Asn-312. Positions 251–338 (SDETFLRDLP…SPSSSTSPSP (88 aa)) constitute a PKD domain. Positions 321–359 (GPCPSPTPSPSSSTSPSPASSPSPTLSTPSPSLMPTGHK) are disordered. Low complexity predominate over residues 330–356 (PSSSTSPSPASSPSPTLSTPSPSLMPT). Residues Asn-461 and Asn-469 are each glycosylated (N-linked (GlcNAc...) asparagine). The chain crosses the membrane as a helical span at residues 501-521 (GVLISIGCLAMFVTMVTILLY). At 522-572 (KKHKTYKPIGNCTRNVVKGKGLSVFLSHAKAPFSRGDREKDPLLQDKPWML) the chain is on the cytoplasmic side. At Ser-544 the chain carries Phosphoserine. The Cell attachment site signature appears at 556 to 558 (RGD).

Belongs to the PMEL/NMB family.

The protein resides in the cell membrane. The protein localises to the melanosome membrane. It is found in the early endosome membrane. Could be a melanogenic enzyme. The protein is Transmembrane glycoprotein NMB (Gpnmb) of Rattus norvegicus (Rat).